A 419-amino-acid polypeptide reads, in one-letter code: L-cysteine:1D-myo-inositol 2-amino-2-deoxy-alpha-D-glucopyranoside ligase (419 aa).

The interval 1–20 (MRSWSVPEVPALPGRGPRVH) is disordered. Cys44 serves as a coordination point for Zn(2+). L-cysteinyl-5'-AMP contacts are provided by residues 44-47 (CGIT), Thr59, and 82-84 (NVT). The short motif at 46-56 (ITPYDATHLGH) is the 'HIGH' region element. The 'ERGGDP' region signature appears at 191-196 (ERGGDP). Trp232 contacts L-cysteinyl-5'-AMP. Cys236 is a Zn(2+) binding site. Position 254 to 256 (254 to 256 (GSD)) interacts with L-cysteinyl-5'-AMP. His261 lines the Zn(2+) pocket. Val289 contributes to the L-cysteinyl-5'-AMP binding site. Positions 295–299 (KMSKS) match the 'KMSKS' region motif.

The protein belongs to the class-I aminoacyl-tRNA synthetase family. MshC subfamily. In terms of assembly, monomer. Requires Zn(2+) as cofactor.

The enzyme catalyses 1D-myo-inositol 2-amino-2-deoxy-alpha-D-glucopyranoside + L-cysteine + ATP = 1D-myo-inositol 2-(L-cysteinylamino)-2-deoxy-alpha-D-glucopyranoside + AMP + diphosphate + H(+). In terms of biological role, catalyzes the ATP-dependent condensation of GlcN-Ins and L-cysteine to form L-Cys-GlcN-Ins. This is L-cysteine:1D-myo-inositol 2-amino-2-deoxy-alpha-D-glucopyranoside ligase from Kineococcus radiotolerans (strain ATCC BAA-149 / DSM 14245 / SRS30216).